We begin with the raw amino-acid sequence, 1267 residues long: DNA-directed RNA polymerase subunit beta'' (1267 aa).

Zn(2+) contacts are provided by Cys222, Cys290, Cys297, and Cys300.

The protein belongs to the RNA polymerase beta' chain family. RpoC2 subfamily. In terms of assembly, in plastids the minimal PEP RNA polymerase catalytic core is composed of four subunits: alpha, beta, beta', and beta''. When a (nuclear-encoded) sigma factor is associated with the core the holoenzyme is formed, which can initiate transcription. Zn(2+) is required as a cofactor.

It localises to the plastid. The protein localises to the chloroplast. The catalysed reaction is RNA(n) + a ribonucleoside 5'-triphosphate = RNA(n+1) + diphosphate. Its function is as follows. DNA-dependent RNA polymerase catalyzes the transcription of DNA into RNA using the four ribonucleoside triphosphates as substrates. This chain is DNA-directed RNA polymerase subunit beta'', found in Emiliania huxleyi (Coccolithophore).